Reading from the N-terminus, the 156-residue chain is ATP synthase subunit b (156 aa).

A helical transmembrane segment spans residues 7–29; it reads LLGQAIAFALFVWFCMKYVWPPI.

The protein belongs to the ATPase B chain family. In terms of assembly, F-type ATPases have 2 components, F(1) - the catalytic core - and F(0) - the membrane proton channel. F(1) has five subunits: alpha(3), beta(3), gamma(1), delta(1), epsilon(1). F(0) has three main subunits: a(1), b(2) and c(10-14). The alpha and beta chains form an alternating ring which encloses part of the gamma chain. F(1) is attached to F(0) by a central stalk formed by the gamma and epsilon chains, while a peripheral stalk is formed by the delta and b chains.

The protein resides in the cell inner membrane. In terms of biological role, f(1)F(0) ATP synthase produces ATP from ADP in the presence of a proton or sodium gradient. F-type ATPases consist of two structural domains, F(1) containing the extramembraneous catalytic core and F(0) containing the membrane proton channel, linked together by a central stalk and a peripheral stalk. During catalysis, ATP synthesis in the catalytic domain of F(1) is coupled via a rotary mechanism of the central stalk subunits to proton translocation. Functionally, component of the F(0) channel, it forms part of the peripheral stalk, linking F(1) to F(0). This chain is ATP synthase subunit b, found in Aliivibrio salmonicida (strain LFI1238) (Vibrio salmonicida (strain LFI1238)).